Reading from the N-terminus, the 220-residue chain is Large ribosomal subunit protein bL25 (220 aa).

It belongs to the bacterial ribosomal protein bL25 family. CTC subfamily. Part of the 50S ribosomal subunit; part of the 5S rRNA/L5/L18/L25 subcomplex. Contacts the 5S rRNA. Binds to the 5S rRNA independently of L5 and L18.

Its function is as follows. This is one of the proteins that binds to the 5S RNA in the ribosome where it forms part of the central protuberance. The polypeptide is Large ribosomal subunit protein bL25 (Zymomonas mobilis subsp. mobilis (strain ATCC 31821 / ZM4 / CP4)).